The following is a 258-amino-acid chain: MLILISPAKTLDYQSPLPTTRYTLPELLDNSQQLIHEARKLTPPQISTLMRISDKLAGINAARFNDWQPDFTPENARQAILAFKGDVYTGLQAETFSEDDFDFAQQHLRMLSGLYGVLRPLDLMQPYRLEMGIRLENARGKDLYQFWGDIITNKLNEALAAQGDNVVINLASDEYFKSVKPKKLNAEIIKPVFLDEKNGKFKIISFYAKKARGLMSRFIIENRLTKPEQLTGFNSEGYFFDEASSSNGELVFKRYEQR.

Belongs to the UPF0246 family.

In Escherichia coli O17:K52:H18 (strain UMN026 / ExPEC), this protein is UPF0246 protein YaaA.